Consider the following 903-residue polypeptide: Protein translocase subunit SecA (903 aa).

ATP is bound by residues glutamine 87, 105-109 (GEGKT), and aspartate 494. The disordered stretch occupies residues 861 to 883 (SGSQGAAPRQPVRAEGKKVGRND). The span at 872-881 (VRAEGKKVGR) shows a compositional bias: basic and acidic residues. Cysteine 885, cysteine 887, cysteine 896, and cysteine 897 together coordinate Zn(2+).

It belongs to the SecA family. Monomer and homodimer. Part of the essential Sec protein translocation apparatus which comprises SecA, SecYEG and auxiliary proteins SecDF. Other proteins may also be involved. Zn(2+) serves as cofactor.

It is found in the cell membrane. The protein resides in the cytoplasm. The catalysed reaction is ATP + H2O + cellular proteinSide 1 = ADP + phosphate + cellular proteinSide 2.. Its function is as follows. Part of the Sec protein translocase complex. Interacts with the SecYEG preprotein conducting channel. Has a central role in coupling the hydrolysis of ATP to the transfer of proteins into and across the cell membrane, serving as an ATP-driven molecular motor driving the stepwise translocation of polypeptide chains across the membrane. This chain is Protein translocase subunit SecA, found in Symbiobacterium thermophilum (strain DSM 24528 / JCM 14929 / IAM 14863 / T).